The chain runs to 317 residues: Methionyl-tRNA formyltransferase (317 aa).

110–113 (SLLP) provides a ligand contact to (6S)-5,6,7,8-tetrahydrofolate.

Belongs to the Fmt family.

It catalyses the reaction L-methionyl-tRNA(fMet) + (6R)-10-formyltetrahydrofolate = N-formyl-L-methionyl-tRNA(fMet) + (6S)-5,6,7,8-tetrahydrofolate + H(+). Its function is as follows. Attaches a formyl group to the free amino group of methionyl-tRNA(fMet). The formyl group appears to play a dual role in the initiator identity of N-formylmethionyl-tRNA by promoting its recognition by IF2 and preventing the misappropriation of this tRNA by the elongation apparatus. The chain is Methionyl-tRNA formyltransferase from Bacillus subtilis (strain 168).